A 247-amino-acid chain; its full sequence is UPF0280 protein MMP1236 (247 aa).

This sequence belongs to the UPF0280 family.

The chain is UPF0280 protein MMP1236 from Methanococcus maripaludis (strain DSM 14266 / JCM 13030 / NBRC 101832 / S2 / LL).